A 169-amino-acid chain; its full sequence is Histone H1.9 (169 aa).

Polar residues-rich tracts occupy residues 1 to 10 (MSLVSPSPDS) and 19 to 36 (DAST…IGPN). Residues 1 to 36 (MSLVSPSPDSNAVMAGDQDASTSQVPSQSESKIGPN) are disordered. Residues 43–116 (RKPTMSKVIL…GASGSFRLGK (74 aa)) form the H15 domain. Phosphoserine occurs at positions 62 and 65. Basic residues predominate over residues 118–142 (QAFKSKCKAKRRQRRQKPGQRRTGS). The interval 118 to 154 (QAFKSKCKAKRRQRRQKPGQRRTGSRRSLLGSKKSNN) is disordered.

Belongs to the histone H1/H5 family.

It is found in the nucleus. Its subcellular location is the chromosome. Its function is as follows. DNA-binding protein that may be implicated in chromatin remodeling and/or transcriptional regulation during spermiogenesis, the process of spermatid maturation into spermatozoa. In Rattus norvegicus (Rat), this protein is Histone H1.9.